Consider the following 301-residue polypeptide: MVRTDRDRWDLATSVGATATMVAAQRALAADPQYALIDDPYAAPLVRAVDIDVYTRLVNGQIPVDVESGFDPARMPEAMACRTRFYDQFFVDATRSGISQVVILASGLDARAYRLGWPAGTVVHEVDMPQVIEFKTLTLADLGAKPTAERRTVAVDLRDDWAAVLQAAGFDKDVPSAWSAEGLLVYLPDDAQGALFDNVTALSATGSRLAFEFVPDTAVFNDERWRSHHARMSELGFEIDFNDLVYHGQRSHVIDHLARDGWQSASHTAKELHAANGLDYPDDDIAAVFADITYTSAVLGR.

Residues Asp127 and 156 to 157 (DL) each bind S-adenosyl-L-methionine.

It belongs to the UPF0677 family.

In terms of biological role, exhibits S-adenosyl-L-methionine-dependent methyltransferase activity. The chain is Putative S-adenosyl-L-methionine-dependent methyltransferase MUL_0450 from Mycobacterium ulcerans (strain Agy99).